The chain runs to 695 residues: Elongation factor G (695 aa).

A tr-type G domain is found at 4-279 (EKVRNIGISA…AVTQYLPSPL (276 aa)). GTP-binding positions include 13-20 (AHIDSGKT), 79-83 (DTPGH), and 133-136 (NKMD).

The protein belongs to the TRAFAC class translation factor GTPase superfamily. Classic translation factor GTPase family. EF-G/EF-2 subfamily.

Its subcellular location is the cytoplasm. Its function is as follows. Catalyzes the GTP-dependent ribosomal translocation step during translation elongation. During this step, the ribosome changes from the pre-translocational (PRE) to the post-translocational (POST) state as the newly formed A-site-bound peptidyl-tRNA and P-site-bound deacylated tRNA move to the P and E sites, respectively. Catalyzes the coordinated movement of the two tRNA molecules, the mRNA and conformational changes in the ribosome. The protein is Elongation factor G of Rhodopirellula baltica (strain DSM 10527 / NCIMB 13988 / SH1).